The primary structure comprises 415 residues: UDP-N-acetylglucosamine 1-carboxyvinyltransferase (415 aa).

22–23 (KN) contacts phosphoenolpyruvate. A UDP-N-acetyl-alpha-D-glucosamine-binding site is contributed by Arg92. Residue Cys116 is the Proton donor of the active site. Position 116 is a 2-(S-cysteinyl)pyruvic acid O-phosphothioketal (Cys116). Residues 121 to 125 (RPIDL), Asp304, and Val326 each bind UDP-N-acetyl-alpha-D-glucosamine.

The protein belongs to the EPSP synthase family. MurA subfamily.

It localises to the cytoplasm. The enzyme catalyses phosphoenolpyruvate + UDP-N-acetyl-alpha-D-glucosamine = UDP-N-acetyl-3-O-(1-carboxyvinyl)-alpha-D-glucosamine + phosphate. It participates in cell wall biogenesis; peptidoglycan biosynthesis. Cell wall formation. Adds enolpyruvyl to UDP-N-acetylglucosamine. The polypeptide is UDP-N-acetylglucosamine 1-carboxyvinyltransferase (Halothermothrix orenii (strain H 168 / OCM 544 / DSM 9562)).